A 261-amino-acid chain; its full sequence is Syntaxin-7 (261 aa).

Serine 2 carries the N-acetylserine modification. Residues serine 2–leucine 238 are Cytoplasmic-facing. Threonine 4 is modified (phosphothreonine). Position 45 is a phosphoserine (serine 45). The stretch at glutamate 47 to lysine 68 forms a coiled coil. Serine 75 carries the post-translational modification Phosphoserine. The residue at position 79 (threonine 79) is a Phosphothreonine. Residues serine 125, serine 126, serine 129, and serine 205 each carry the phosphoserine modification. A disordered region spans residues valine 128 to glutamine 148. A t-SNARE coiled-coil homology domain is found at leucine 165 to alanine 227. The helical; Anchor for type IV membrane protein transmembrane segment at cysteine 239–leucine 259 threads the bilayer. At lysine 260–glycine 261 the chain is on the vesicular side.

The protein belongs to the syntaxin family. As to quaternary structure, interacts with VPS11, VPS16 and VPS18. Interacts with VPS33A. Forms a SNARE complex with VTI1B, STX8 and VAMP8 which functions in the homotypic fusion of late endosomes. Component of the SNARE complex composed of STX7, STX8, VAMP7 and VTI1B that is required for heterotypic fusion of late endosomes with lysosomes. Interacts with TPC1.

Its subcellular location is the early endosome membrane. May be involved in protein trafficking from the plasma membrane to the early endosome (EE) as well as in homotypic fusion of endocytic organelles. Mediates the endocytic trafficking from early endosomes to late endosomes and lysosomes. This chain is Syntaxin-7 (Stx7), found in Mus musculus (Mouse).